The sequence spans 373 residues: Probable protein phosphatase 2C 73 (373 aa).

One can recognise a PPM-type phosphatase domain in the interval 61–354; it reads LASLFSKRGE…DDMSVVCLFL (294 aa). Mn(2+)-binding residues include aspartate 97, glycine 98, aspartate 299, and aspartate 345.

It belongs to the PP2C family. The cofactor is Mg(2+). It depends on Mn(2+) as a cofactor.

The catalysed reaction is O-phospho-L-seryl-[protein] + H2O = L-seryl-[protein] + phosphate. It carries out the reaction O-phospho-L-threonyl-[protein] + H2O = L-threonyl-[protein] + phosphate. The sequence is that of Probable protein phosphatase 2C 73 (PPC6-7) from Arabidopsis thaliana (Mouse-ear cress).